Here is a 310-residue protein sequence, read N- to C-terminus: uncharacterized protein (310 aa).

The 58-residue stretch at 5 to 62 folds into the HTH lysR-type domain; the sequence is FTEENLLAFTTAARFGSFSKAAEELGLTTSAISYTIKRMETGLDVVLFTRSTRSIELT. The H-T-H motif DNA-binding region spans 22–42; the sequence is FSKAAEELGLTTSAISYTIKR.

Belongs to the LysR transcriptional regulatory family.

This is an uncharacterized protein from Escherichia coli (strain K12).